The primary structure comprises 382 residues: U11/U12 small nuclear ribonucleoprotein 59 kDa protein (382 aa).

Residues asparagine 31–lysine 63 are a coiled coil. The segment at serine 274–asparagine 297 is disordered. Positions asparagine 277–asparagine 287 are enriched in low complexity.

In terms of assembly, component of the U11/U12 snRNPs that are part of the U12-type spliceosome.

It localises to the nucleus. In Arabidopsis thaliana (Mouse-ear cress), this protein is U11/U12 small nuclear ribonucleoprotein 59 kDa protein (SNRNP59).